Consider the following 498-residue polypeptide: ATP synthase subunit beta, chloroplastic (498 aa).

172-179 (GGAGVGKT) provides a ligand contact to ATP.

This sequence belongs to the ATPase alpha/beta chains family. F-type ATPases have 2 components, CF(1) - the catalytic core - and CF(0) - the membrane proton channel. CF(1) has five subunits: alpha(3), beta(3), gamma(1), delta(1), epsilon(1). CF(0) has four main subunits: a(1), b(1), b'(1) and c(9-12).

It is found in the plastid. The protein resides in the chloroplast thylakoid membrane. The enzyme catalyses ATP + H2O + 4 H(+)(in) = ADP + phosphate + 5 H(+)(out). Produces ATP from ADP in the presence of a proton gradient across the membrane. The catalytic sites are hosted primarily by the beta subunits. This is ATP synthase subunit beta, chloroplastic from Phalaenopsis aphrodite subsp. formosana (Moth orchid).